The primary structure comprises 237 residues: MTPQDFYRTLEEDGFSLSSKQKEQFDTYFKLLVEWNTKINLTAITEENEVYLKHFYDSIAPILQAFLANEPIKLLDIGAGAGFPSLPMKILFPNLEVTIIDSLNKRISFLTLLAQELGLENVHFFHGRAEDFGQDKAFRGQFDVVTARAVARMQVLSELTIPFLKIGGKLIALKAQAADQELEEAKNALCLLFGKVIKNHSYQLPNGDSRFITIVEKKKETPNKYPRKAGLPNKKPL.

S-adenosyl-L-methionine is bound by residues glycine 78, phenylalanine 83, 129–130 (AE), and arginine 148.

This sequence belongs to the methyltransferase superfamily. RNA methyltransferase RsmG family.

The protein resides in the cytoplasm. Its function is as follows. Specifically methylates the N7 position of a guanine in 16S rRNA. The chain is Ribosomal RNA small subunit methyltransferase G from Streptococcus pyogenes serotype M12 (strain MGAS2096).